Consider the following 285-residue polypeptide: Transcription factor LBX1 (285 aa).

The span at 1-20 shows a compositional bias: basic and acidic residues; it reads MTSKEDGKAAPGEERRRSPL. The disordered stretch occupies residues 1–36; it reads MTSKEDGKAAPGEERRRSPLDHLPPPANSNKPLTPF. The homeobox DNA-binding region spans 125 to 184; it reads RRKSRTAFTNHQIYELEKRFLYQKYLSPADRDQIAQQLGLTNAQVITWFQNRRAKLKRDL. The interval 212–285 is disordered; it reads EQNSEASGGG…EEDEEIDVDD (74 aa). A compositionally biased stretch (gly residues) spans 218–230; sequence SGGGGGGGGGGCG. The segment covering 272–285 has biased composition (acidic residues); sequence CSEDEEDEEIDVDD.

In terms of assembly, interacts with SKOR1 which acts as a transcriptional corepressor.

Its subcellular location is the nucleus. Functionally, transcription factor required for the development of GABAergic interneurons in the dorsal horn of the spinal cord and migration and further development of hypaxial muscle precursor cells for limb muscles, diaphragm and hypoglossal cord. This chain is Transcription factor LBX1, found in Rattus norvegicus (Rat).